A 181-amino-acid chain; its full sequence is Cytolethal distending toxin subunit C (181 aa).

Positions 1–15 (MKKLAIVFTMLLIAG) are cleaved as a signal peptide. A lipid anchor (N-palmitoyl cysteine) is attached at C16. A lipid anchor (S-diacylglycerol cysteine) is attached at C16. The region spanning 79-181 (QSGWIMIRTP…NPLNTESPII (103 aa)) is the Ricin B-type lectin domain.

As to quaternary structure, heterotrimer of 3 subunits, CdtA, CdtB and CdtC.

It localises to the cell outer membrane. Part of the tripartite complex that is required for the CDT activity. CdtC, along with CdtA, probably forms a heterodimeric subunit required for the delivery of CdtB. The protein is Cytolethal distending toxin subunit C (cdtC) of Escherichia coli.